The sequence spans 179 residues: Large ribosomal subunit protein uL5 (179 aa).

This sequence belongs to the universal ribosomal protein uL5 family. In terms of assembly, part of the 50S ribosomal subunit; part of the 5S rRNA/L5/L18/L25 subcomplex. Contacts the 5S rRNA and the P site tRNA. Forms a bridge to the 30S subunit in the 70S ribosome.

This is one of the proteins that bind and probably mediate the attachment of the 5S RNA into the large ribosomal subunit, where it forms part of the central protuberance. In the 70S ribosome it contacts protein S13 of the 30S subunit (bridge B1b), connecting the 2 subunits; this bridge is implicated in subunit movement. Contacts the P site tRNA; the 5S rRNA and some of its associated proteins might help stabilize positioning of ribosome-bound tRNAs. The sequence is that of Large ribosomal subunit protein uL5 from Salmonella agona (strain SL483).